A 580-amino-acid polypeptide reads, in one-letter code: E3 ubiquitin-protein ligase TRIM45 (580 aa).

The RING-type zinc-finger motif lies at 29-98 (CPLCLGLFKA…QIGILCPVCD (70 aa)). B box-type zinc fingers lie at residues 130–176 (GQGL…MVDL) and 186–227 (GKPI…CDFT). Positions 135, 138, 158, 162, 191, 194, 214, and 219 each coordinate Zn(2+). Positions 281-335 (SEGYIKAIEEHRDKLLKQLEDIRAQKENSLQLQKAQLEQLLADMRTGVEFTEHLL) form a coiled coil. One copy of the Filamin repeat lies at 394-497 (TKEVDPAKCV…VQGSPFTVMV (104 aa)).

Belongs to the TRIM/RBCC family. As to expression, expressed in skeletal muscle, brain, heart and pancreas.

It is found in the cytoplasm. Its subcellular location is the nucleus. The enzyme catalyses S-ubiquitinyl-[E2 ubiquitin-conjugating enzyme]-L-cysteine + [acceptor protein]-L-lysine = [E2 ubiquitin-conjugating enzyme]-L-cysteine + N(6)-ubiquitinyl-[acceptor protein]-L-lysine.. E3 ubiquitin-protein ligase that plays a role in the regulation of inflammatory response. Mechanistically, mediates the 'Lys-48'-linked polyubiquitination of TAB2, a regulatory protein of the kinase TAK1, leading to its degradation via the proteasomal pathway and inhibition of the TLR-mediated inflammatory immune response. May act as a transcriptional repressor in mitogen-activated protein kinase signaling pathway. The sequence is that of E3 ubiquitin-protein ligase TRIM45 (TRIM45) from Homo sapiens (Human).